The primary structure comprises 94 residues: Co-chaperonin GroES (94 aa).

The protein belongs to the GroES chaperonin family. As to quaternary structure, heptamer of 7 subunits arranged in a ring. Interacts with the chaperonin GroEL.

It is found in the cytoplasm. Its function is as follows. Together with the chaperonin GroEL, plays an essential role in assisting protein folding. The GroEL-GroES system forms a nano-cage that allows encapsulation of the non-native substrate proteins and provides a physical environment optimized to promote and accelerate protein folding. GroES binds to the apical surface of the GroEL ring, thereby capping the opening of the GroEL channel. The sequence is that of Co-chaperonin GroES from Clostridium botulinum.